We begin with the raw amino-acid sequence, 364 residues long: Nucleosome assembly protein 1;2 (364 aa).

Positions 32–86 (VESIKNTLQGLAARHTDVLESLEPKVRKRVEVLREIQSQHDDLEAKFFEERAALE) form a coiled coil. The Nuclear export signal motif lies at 53-68 (LEPKVRKRVEVLREIQ). A Nuclear localization signal motif is present at residues 227-232 (KKKPKK). Disordered regions lie at residues 250-269 (FNFFSPPQVPDDDEEIDEDT) and 301-364 (GEAA…CKQQ). Acidic residues-rich tracts occupy residues 259 to 269 (PDDDEEIDEDT) and 304 to 340 (AQDEDFEGIMDDEDDDDEDDDDDEDEDDEDDDEDDED). Residue Cys-361 is modified to Cysteine methyl ester. Cys-361 carries S-farnesyl cysteine lipidation. A propeptide spans 362–364 (KQQ) (removed in mature form).

The protein belongs to the nucleosome assembly protein (NAP) family. As to quaternary structure, binds preferentially histone H1 in vitro. Highly expressed in tissues exhibiting active cell-division activities, such as root and shoot meristems and young flowers.

The protein resides in the nucleus. It localises to the cytoplasm. Functionally, may modulate chromatin structure by regulation of nucleosome assembly/disassembly. The polypeptide is Nucleosome assembly protein 1;2 (NAP1;2) (Oryza sativa subsp. indica (Rice)).